A 546-amino-acid polypeptide reads, in one-letter code: MTPGEVRRLYFIIRTFLSYGLDELIPRMRLTLPLRLWRYSLFWMPNRHKDKLLGERLRLALQELGPVWIKFGQMLSTRRDLFPPQIADQLALLQDKVAPFDGRLAKAQIEEAMGGLPVDAWFDDFDIQPLASASIAQVHTARLKSNGKEVVIKVIRPDILPVIQADLKLIYRLARWVPRLLPDGRRLRPTEVVREYEKTLIDELNLLRESANAIQLRRNFENSPMLYIPEVYSDYCSQNMMVMERIYGIPVSDVAALEKNGTNMKLLAERGVKVFFTQVFRDSFFHADMHPGNIFVSHEHPENPQYIGIDCGIVGSLNKEDKRYLAENFIAFFNRDYRKVAELHVDSGWVPPDTNVEDFEFAIRTVCEPIFEKPLAEISFGHVLLNLFNTARRFNMEVQPQLVLLQKTLLYVEGVGRQLYPQLDLWKTAKPFLESWIKDQVGIPALTRALKEKAPFWVEKMPEIPELVYDSLRQGKYLQHSVDKIARELQVNHVRQSQSRYLLGIGATLLLSGSFLLVNRPEWGLMPSWLMVGGVVVWLVGWRKTR.

One can recognise a Protein kinase domain in the interval 124–502 (DFDIQPLASA…HVRQSQSRYL (379 aa)). ATP is bound by residues 130-138 (LASASIAQV) and Lys-153. The active-site Proton acceptor is the Asp-288. 2 helical membrane passes run 501-521 (YLLG…VNRP) and 522-542 (EWGL…LVGW).

The protein belongs to the ABC1 family. UbiB subfamily.

The protein resides in the cell inner membrane. Its pathway is cofactor biosynthesis; ubiquinone biosynthesis [regulation]. Its function is as follows. Is probably a protein kinase regulator of UbiI activity which is involved in aerobic coenzyme Q (ubiquinone) biosynthesis. In Salmonella gallinarum (strain 287/91 / NCTC 13346), this protein is Probable protein kinase UbiB.